Reading from the N-terminus, the 318-residue chain is DNA repair nuclease/redox regulator APEX1 (318 aa).

A disordered region spans residues Met-1–Ser-59. A necessary for interaction with YBX1, binding to RNA, association together with NPM1 to rRNA, endoribonuclease activity on abasic RNA and localization in the nucleoli region spans residues Pro-2–Asn-33. Residues Lys-6 and Lys-7 each carry the N6-acetyllysine; by EP300 modification. Residues Gly-8–Asp-13 carry the Nuclear localization signal (NLS) motif. Residues Glu-16–Val-38 show a composition bias toward basic and acidic residues. Residues Ala-23–Asn-33 form a necessary for interaction with NPM1 and for efficient rRNA binding region. Residues Lys-27, Lys-31, Lys-32, and Lys-35 each carry the N6-acetyllysine modification. Ser-54 carries the post-translational modification Phosphoserine. The short motif at Ile-64–Gly-80 is the Nuclear export signal (NES) element. S-nitrosocysteine; alternate is present on Cys-65. Cys-65 and Cys-93 form a disulfide bridge. Asp-70 contributes to the Mg(2+) binding site. Cys-93 carries the S-nitrosocysteine; alternate modification. Glu-96 lines the Mg(2+) pocket. Tyr-171 is a catalytic residue. At Lys-197 the chain carries N6-acetyllysine. Positions 210 and 212 each coordinate Mg(2+). Asp-210 acts as the Proton donor/acceptor in catalysis. Residue Thr-233 is modified to Phosphothreonine; by CDK5. The interval Gln-289 to Leu-318 is mitochondrial targeting sequence (MTS). Mg(2+) is bound at residue Asp-308. Cys-310 carries the S-nitrosocysteine modification.

The protein belongs to the DNA repair enzymes AP/ExoA family. In terms of assembly, monomer. Homodimer; disulfide-linked. Component of the SET complex, composed of at least APEX1, SET, ANP32A, HMGB2, NME1 and TREX1. Associates with the dimer XRCC5/XRCC6 in a DNA-dependent manner. Interacts with SIRT1; the interaction is increased in the context of genotoxic stress. Interacts with HDAC1, HDAC2 and HDAC3; the interactions are not dependent on the APEX1 acetylation status. Interacts with XRCC1; the interaction is induced by SIRT1 and increased with the APEX1 acetylated form. Interacts with NPM1 (via N-terminal domain); the interaction is RNA-dependent and decreases in hydrogen peroxide-damaged cells. Interacts (via N-terminus) with YBX1 (via C-terminus); the interaction is increased in presence of APEX1 acetylated at Lys-6 and Lys-7. Interacts with HNRNPL; the interaction is DNA-dependent. Interacts (via N-terminus) with KPNA1 and KPNA2. Interacts with TXN; the interaction stimulates the FOS/JUN AP-1 complex DNA-binding activity in a redox-dependent manner. Interacts with GZMA, KRT8, MDM2, POLB, PRDX6, PRPF19, RPLP0, TOMM20 and WDR77. Binds to CDK5. Mg(2+) is required as a cofactor. The cofactor is Mn(2+). Post-translationally, phosphorylated. Phosphorylation by kinase PKC or casein kinase CK2 results in enhanced redox activity that stimulates binding of the FOS/JUN AP-1 complex to its cognate binding site. AP-endodeoxyribonuclease activity is not affected by CK2-mediated phosphorylation. Phosphorylation of Thr-233 by CDK5 in response to MPP(+)/MPTP (1-methyl-4-phenylpyridinium) reduces AP-endodeoxyribonuclease activity resulting in accumulation of DNA damage and contributing to neuronal death. Acetylated on Lys-6 and Lys-7. Acetylation is increased by the transcriptional coactivator EP300 acetyltransferase, genotoxic agents like H(2)O(2) and methyl methanesulfonate (MMS). Acetylation increases its binding affinity to the negative calcium response element (nCaRE) DNA promoter. The acetylated form induces a stronger binding of YBX1 to the Y-box sequence in the MDR1 promoter than the unacetylated form. Deacetylated on lysines. Lys-6 and Lys-7 are deacetylated by SIRT1. In terms of processing, cleaved at Lys-31 by granzyme A to create the mitochondrial form; leading in reduction of binding to DNA, AP endodeoxyribonuclease activity, redox activation of transcription factors and to enhanced cell death. Cleaved by granzyme K; leading to intracellular ROS accumulation and enhanced cell death after oxidative stress. Post-translationally, cys-69 and Cys-93 are nitrosylated in response to nitric oxide (NO) and lead to the exposure of the nuclear export signal (NES). Ubiquitinated by MDM2; leading to translocation to the cytoplasm and proteasomal degradation. In terms of tissue distribution, the mitochondrial form is expressed in liver (at protein level). Thymus.

The protein resides in the nucleus. It is found in the nucleolus. It localises to the nucleus speckle. The protein localises to the endoplasmic reticulum. Its subcellular location is the cytoplasm. The protein resides in the mitochondrion. It catalyses the reaction Exonucleolytic cleavage in the 3'- to 5'-direction to yield nucleoside 5'-phosphates.. With respect to regulation, NPM1 stimulates endodeoxyribonuclease activity on double-stranded DNA with AP sites, but inhibits endoribonuclease activity on single-stranded RNA containing AP sites. Functionally, multifunctional protein that plays a central role in the cellular response to oxidative stress. The two major activities of APEX1 are DNA repair and redox regulation of transcriptional factors. Functions as an apurinic/apyrimidinic (AP) endodeoxyribonuclease in the DNA base excision repair (BER) pathway of DNA lesions induced by oxidative and alkylating agents. Initiates repair of AP sites in DNA by catalyzing hydrolytic incision of the phosphodiester backbone immediately adjacent to the damage, generating a single-strand break with 5'-deoxyribose phosphate and 3'-hydroxyl ends. Also incises at AP sites in the DNA strand of DNA/RNA hybrids, single-stranded DNA regions of R-loop structures, and single-stranded RNA molecules. Has 3'-5' exoribonuclease activity on mismatched deoxyribonucleotides at the 3' termini of nicked or gapped DNA molecules during short-patch BER. Possesses DNA 3' phosphodiesterase activity capable of removing lesions (such as phosphoglycolate) blocking the 3' side of DNA strand breaks. May also play a role in the epigenetic regulation of gene expression by participating in DNA demethylation. Acts as a loading factor for POLB onto non-incised AP sites in DNA and stimulates the 5'-terminal deoxyribose 5'-phosphate (dRp) excision activity of POLB. Plays a role in the protection from granzyme-mediated cellular repair leading to cell death. Also involved in the DNA cleavage step of class switch recombination (CSR). On the other hand, APEX1 also exerts reversible nuclear redox activity to regulate DNA binding affinity and transcriptional activity of transcriptional factors by controlling the redox status of their DNA-binding domain, such as the FOS/JUN AP-1 complex after exposure to IR. Involved in calcium-dependent down-regulation of parathyroid hormone (PTH) expression by binding to negative calcium response elements (nCaREs). Together with HNRNPL or the dimer XRCC5/XRCC6, associates with nCaRE, acting as an activator of transcriptional repression. Stimulates the YBX1-mediated MDR1 promoter activity, when acetylated at Lys-6 and Lys-7, leading to drug resistance. Also acts as an endoribonuclease involved in the control of single-stranded RNA metabolism. Plays a role in regulating MYC mRNA turnover by preferentially cleaving in between UA and CA dinucleotides of the MYC coding region determinant (CRD). In association with NMD1, plays a role in the rRNA quality control process during cell cycle progression. Associates, together with YBX1, on the MDR1 promoter. Together with NPM1, associates with rRNA. Binds DNA and RNA. This chain is DNA repair nuclease/redox regulator APEX1 (APEX1), found in Bos taurus (Bovine).